Reading from the N-terminus, the 97-residue chain is UPF0729 protein GD16342 (97 aa).

The interval 64 to 97 is disordered; sequence KPEKASVGPAEESQNPPLNAIAAETEVDESKKEI. A Phosphoserine modification is found at Ser69.

This sequence belongs to the UPF0729 family.

This is UPF0729 protein GD16342 from Drosophila simulans (Fruit fly).